The chain runs to 366 residues: NADH-quinone oxidoreductase subunit H (366 aa).

The next 8 helical transmembrane spans lie at 27–47, 99–119, 134–154, 168–188, 206–226, 268–288, 294–314, and 329–349; these read LLLI…LTFA, FLFL…WAVV, LLYI…AGWA, AAQV…VLMM, FLNW…ISGV, ILVA…PVDI, IPGM…FLWF, and LGWK…GMVM.

It belongs to the complex I subunit 1 family. As to quaternary structure, NDH-1 is composed of 14 different subunits. Subunits NuoA, H, J, K, L, M, N constitute the membrane sector of the complex.

The protein localises to the cell inner membrane. The enzyme catalyses a quinone + NADH + 5 H(+)(in) = a quinol + NAD(+) + 4 H(+)(out). NDH-1 shuttles electrons from NADH, via FMN and iron-sulfur (Fe-S) centers, to quinones in the respiratory chain. The immediate electron acceptor for the enzyme in this species is believed to be ubiquinone. Couples the redox reaction to proton translocation (for every two electrons transferred, four hydrogen ions are translocated across the cytoplasmic membrane), and thus conserves the redox energy in a proton gradient. This subunit may bind ubiquinone. In Nitrosomonas europaea (strain ATCC 19718 / CIP 103999 / KCTC 2705 / NBRC 14298), this protein is NADH-quinone oxidoreductase subunit H.